The chain runs to 130 residues: Small ribosomal subunit protein uS9 (130 aa).

Residues 109 to 130 form a disordered region; it reads RVKERKKPGLKKARKARQFSKR. Basic residues predominate over residues 111–130; the sequence is KERKKPGLKKARKARQFSKR.

The protein belongs to the universal ribosomal protein uS9 family.

This chain is Small ribosomal subunit protein uS9, found in Mycoplasma mobile (strain ATCC 43663 / 163K / NCTC 11711) (Mesomycoplasma mobile).